Here is a 299-residue protein sequence, read N- to C-terminus: Tetrahydromethanopterin S-methyltransferase subunit E (299 aa).

6 helical membrane-spanning segments follow: residues 57-79 (AISG…AWAL), 89-111 (AIIV…AFLG), 132-154 (HIGP…AYLA), 164-183 (LPLV…SSTG), 227-246 (FCSR…IIFL), and 261-283 (LVTK…AVIN).

It belongs to the MtrE family. As to quaternary structure, the complex is composed of 8 subunits; MtrA, MtrB, MtrC, MtrD, MtrE, MtrF, MtrG and MtrH.

The protein resides in the cell membrane. It catalyses the reaction 5-methyl-5,6,7,8-tetrahydromethanopterin + coenzyme M + 2 Na(+)(in) = 5,6,7,8-tetrahydromethanopterin + methyl-coenzyme M + 2 Na(+)(out). Its pathway is one-carbon metabolism; methanogenesis from CO(2); methyl-coenzyme M from 5,10-methylene-5,6,7,8-tetrahydromethanopterin: step 2/2. Part of a complex that catalyzes the formation of methyl-coenzyme M and tetrahydromethanopterin from coenzyme M and methyl-tetrahydromethanopterin. This is an energy-conserving, sodium-ion translocating step. The protein is Tetrahydromethanopterin S-methyltransferase subunit E of Methanococcus maripaludis (strain DSM 14266 / JCM 13030 / NBRC 101832 / S2 / LL).